The following is a 179-amino-acid chain: Adenine phosphoribosyltransferase (179 aa).

Belongs to the purine/pyrimidine phosphoribosyltransferase family. As to quaternary structure, homodimer.

The protein localises to the cytoplasm. The enzyme catalyses AMP + diphosphate = 5-phospho-alpha-D-ribose 1-diphosphate + adenine. It functions in the pathway purine metabolism; AMP biosynthesis via salvage pathway; AMP from adenine: step 1/1. Functionally, catalyzes a salvage reaction resulting in the formation of AMP, that is energically less costly than de novo synthesis. The protein is Adenine phosphoribosyltransferase of Azorhizobium caulinodans (strain ATCC 43989 / DSM 5975 / JCM 20966 / LMG 6465 / NBRC 14845 / NCIMB 13405 / ORS 571).